Reading from the N-terminus, the 235-residue chain is Sugar fermentation stimulation protein homolog (235 aa).

It belongs to the SfsA family.

The polypeptide is Sugar fermentation stimulation protein homolog (Maricaulis maris (strain MCS10) (Caulobacter maris)).